Consider the following 975-residue polypeptide: Kinesin heavy chain (975 aa).

Residues 12–333 (SIKVVCRFRP…LDFGRRAKTV (322 aa)) form the Kinesin motor domain. 92-99 (GQTSSGKT) provides a ligand contact to ATP. The microtubule-binding stretch occupies residues 180-321 (VSSPEDVFEV…PASFNESETK (142 aa)). Residues 335–931 (NVVCVNEELT…DRIKEAVRQK (597 aa)) adopt a coiled-coil conformation. Positions 810–891 (VAKELQTLHN…LPKLEKRLRC (82 aa)) are necessary for associating with milt. Residues 932–975 (HLGRRGPQAQIAKPIRSGQGAIAIRGGGAVGGPSPLAQVNPVNS) form a globular region.

It belongs to the TRAFAC class myosin-kinesin ATPase superfamily. Kinesin family. Kinesin subfamily. In terms of assembly, oligomer composed of two heavy chains and two light chains.

The protein localises to the cytoplasm. It is found in the cytoskeleton. In terms of biological role, kinesin is a microtubule-associated force-producing protein that may play a role in organelle transport. Milt and Miro form an essential protein complex that links Khc to mitochondria for light chain-independent, anterograde transport of mitochondria. The protein is Kinesin heavy chain (Khc) of Drosophila melanogaster (Fruit fly).